A 103-amino-acid polypeptide reads, in one-letter code: Large ribosomal subunit protein bL21 (103 aa).

It belongs to the bacterial ribosomal protein bL21 family. Part of the 50S ribosomal subunit. Contacts protein L20.

This protein binds to 23S rRNA in the presence of protein L20. This is Large ribosomal subunit protein bL21 from Variovorax paradoxus (strain S110).